The sequence spans 376 residues: Protein RecA (376 aa).

Residue 79 to 86 (GPESSGKT) participates in ATP binding. Residues 357-376 (AAARAATDKPVETKGANAAA) are disordered.

It belongs to the RecA family.

Its subcellular location is the cytoplasm. In terms of biological role, can catalyze the hydrolysis of ATP in the presence of single-stranded DNA, the ATP-dependent uptake of single-stranded DNA by duplex DNA, and the ATP-dependent hybridization of homologous single-stranded DNAs. It interacts with LexA causing its activation and leading to its autocatalytic cleavage. The sequence is that of Protein RecA from Synechococcus sp. (strain CC9902).